A 440-amino-acid chain; its full sequence is Thymidine phosphorylase (440 aa).

This sequence belongs to the thymidine/pyrimidine-nucleoside phosphorylase family. Homodimer.

It catalyses the reaction thymidine + phosphate = 2-deoxy-alpha-D-ribose 1-phosphate + thymine. It participates in pyrimidine metabolism; dTMP biosynthesis via salvage pathway; dTMP from thymine: step 1/2. In terms of biological role, the enzymes which catalyze the reversible phosphorolysis of pyrimidine nucleosides are involved in the degradation of these compounds and in their utilization as carbon and energy sources, or in the rescue of pyrimidine bases for nucleotide synthesis. This is Thymidine phosphorylase from Klebsiella pneumoniae (strain 342).